A 319-amino-acid chain; its full sequence is 12-(S)-hydroxy-5,8,10,14-eicosatetraenoic acid receptor (319 aa).

The Extracellular portion of the chain corresponds to 1–16 (MERTNCSAASTVVETA). Residue asparagine 5 is glycosylated (N-linked (GlcNAc...) asparagine). The chain crosses the membrane as a helical span at residues 17–37 (VGTMLTLECVLGLMGNAVALW). Residues 38-52 (TFFYRLKVWKPYAVY) lie on the Cytoplasmic side of the membrane. A helical transmembrane segment spans residues 53-73 (LFNLVVADLLLATSLPFFAAF). The Extracellular portion of the chain corresponds to 74–91 (YLKGKTWKLGHMPCQVLL). The chain crosses the membrane as a helical span at residues 92-110 (FLLAFSRGVGVAFLTTVAL). Residues 111-131 (DRYLRVVHPRLRVNLLSLRAA) are Cytoplasmic-facing. A helical membrane pass occupies residues 132 to 152 (WGISSLIWLLMVVLTPQNLLT). The Extracellular segment spans residues 153–180 (CRTTQNSTECPSFYPTGGAKAIATCQEV). A helical transmembrane segment spans residues 181 to 201 (LFFLQVLLPFGLISFCNSGLI). The Cytoplasmic portion of the chain corresponds to 202-219 (RTLQKRLRESDKQPRIRR). The chain crosses the membrane as a helical span at residues 220 to 240 (ARVLVAIVLLLFGLCFLPSVL). The Extracellular segment spans residues 241–265 (TRVLVHIFQEFKSCSVQQAIVRASD). A helical membrane pass occupies residues 266–284 (IAGSLTCLHSTLSPAIYCF). Residues 285–319 (SNPAFTHSYRKVLKSLRGRRKAAESPSDNLRDSYS) are Cytoplasmic-facing.

This sequence belongs to the G-protein coupled receptor 1 family. As to quaternary structure, interacts with KRAS; in a farnesylation-dependent manner.

The protein localises to the cell membrane. In terms of biological role, high-affinity receptor for 12-(S)-hydroxy-5,8,10,14-eicosatetraenoic acid (12-S-HETE), with much lower affinities for other HETE isomers. 12-S-HETE is a eicosanoid, a 12-lipoxygenase (ALOX12) metabolite of arachidonic acid, involved in many physiologic and pathologic processes, such as cell growth, adhesion, inflammation and cancer promotion. 12-S-HETE-binding leads to activation of ERK1/2 (MAPK3/MAPK1), MEK, and NF-kappa-B pathways and leads to cell growth. Plays a crucial role for proliferation, survival and macropinocytosis of KRAS-dependent cancer cells by mediating the translocation of KRAS from the endoplasmic reticulum to the plasma membrane (PM) and its association with the PM. Contributes to enhanced immune responses by inducing dendrite protrusion of small intestinal CX3CR1(+) phagocytes for the uptake of luminal antigens. Also acts as a key receptor for 12-(S)-HETE-mediated liver ischemia reperfusion injury. Its function is as follows. Proton-sensing G protein-coupled receptor. This is 12-(S)-hydroxy-5,8,10,14-eicosatetraenoic acid receptor (Gpr31) from Mus musculus (Mouse).